We begin with the raw amino-acid sequence, 141 residues long: Nucleoside triphosphatase NudI (141 aa).

Positions 1-141 (MRQRTIVCPI…RLTFTQKGLL (141 aa)) constitute a Nudix hydrolase domain. A Nudix box motif is present at residues 38–59 (GGMEPGETMEEALRREIREELG).

The protein belongs to the Nudix hydrolase family. NudI subfamily. As to quaternary structure, monomer. Mg(2+) serves as cofactor.

The catalysed reaction is a ribonucleoside 5'-triphosphate + H2O = a ribonucleoside 5'-phosphate + diphosphate + H(+). The enzyme catalyses a 2'-deoxyribonucleoside 5'-triphosphate + H2O = a 2'-deoxyribonucleoside 5'-phosphate + diphosphate + H(+). It carries out the reaction dUTP + H2O = dUMP + diphosphate + H(+). It catalyses the reaction dTTP + H2O = dTMP + diphosphate + H(+). The catalysed reaction is dCTP + H2O = dCMP + diphosphate + H(+). Its function is as follows. Catalyzes the hydrolysis of nucleoside triphosphates, with a preference for pyrimidine deoxynucleoside triphosphates (dUTP, dTTP and dCTP). This is Nucleoside triphosphatase NudI from Enterobacter sp. (strain 638).